An 89-amino-acid chain; its full sequence is uncharacterized protein (89 aa).

Residues 20–39 (SFAMTTYLNLFVKLLIFLYI) traverse the membrane as a helical segment.

The protein resides in the membrane. This is an uncharacterized protein from Escherichia coli (strain K12).